The primary structure comprises 869 residues: MLKMSVTPMMEQYLKIKEKYKDAILFFRLGDFYEMFYEDAEIAAKELEIALTGRDAGTEERAPMAGVPYHAADFYIDKLVKKGYKVAICEQLEDPSKAKGLVKRDVVRIYTPGTIINPESMDEKSNNYLVSVYREKDNYGICAVDVTTGELYATEIKNCKNGKRIYDEIAKYSPSEIISNEEFLKNNKYIKVFKNNNCAVNAYKPLNYEASSELIEKQFDKKVEELELEDKKFVIHSLGALLSYLKELQKTSLKHINKLTLYQDNSYMGLDSNAIRNLEILESNRNKSKKGSLLGVLDRTVTPMGGRLLKKWLEEPLIDKDEIEKRLDAVEELFNNYRERIELKELLNKVYDLERLASKIVYQSVTPKDFISIKLSLQNLPKIKNILSKFSSRLLKEIYEKLDVLQDVYELIDKSIKDDPSNQLKEGNIIKDGYNEMVDKLRKASTEGKNWIANLEADEREKTGIKNLRIGYNKVFGYYIEVTKSNIPQVPDRYIRKQTLANAERYVTPELKEIEETILGAEEKLIELEYELFNEIREKVELQIVRIQNTAKYIAIIDVLISFAEVAETNKYVKPIVDYEDRIVIKEGRHPVVETISDEGFVANDIDIGPENPIMIITGPNMAGKSTYMRQVALIVLMAQVGCFVPASYARIGIVDKIFTRVGASDDIFAGQSTFMVEMSEVANILHSATSKSLIILDEVGRGTSTYDGMSIAQAVIEYIHEKIKAKTLFATHYHELTKLEGKLRGVRNFNVSVEEREDDIIFLHKIVPGGSDRSYGIQVSKLAGLPYSIIERAKEILEALERDKAVKNELEEAVSQFAFTQIDIFSSAKDALIEEIANCDPDNMTPLQALTYLYKLKEKAASLRSGVI.

Position 619–626 (619–626 (GPNMAGKS)) interacts with ATP.

Belongs to the DNA mismatch repair MutS family.

This protein is involved in the repair of mismatches in DNA. It is possible that it carries out the mismatch recognition step. This protein has a weak ATPase activity. The polypeptide is DNA mismatch repair protein MutS (Caldanaerobacter subterraneus subsp. tengcongensis (strain DSM 15242 / JCM 11007 / NBRC 100824 / MB4) (Thermoanaerobacter tengcongensis)).